The primary structure comprises 569 residues: MKFQRKYWGLLSTLGVSSAVALSACAAQARDVYVTSSASDLLKNNLVPMSMFNVSPTSSFFGSKYAGLTTYIATGSNKDDGVNVTSQTQEKLVLELATSVKGYKKKTSTASNMKTASVSSSSSSTGNNGSTEDEWEVVGSEIKRESGKGDNGKSITEDSNFQTISQQATRYEFTIDTSIKWVDNNGKPVKDEKGQEVKLSSKDFERGFEAYILSSELRFNRNGYFIDLMGLDVEKTVGMTNGKNGTQVKKMTTDSSSTQQSEEKKIEITDDNYDPEDYRSTSDDKFNVYLTSPFPFLLSMMSKEFFFPIPHTHPKVKAIKVGPNSPLVYNEKNSAKILDQTKTNFDGIYGGGGVNAWRDAWSVGPYYVESFNQSQIVFKRNKEYDDHITPNLPKTREGNEQPIPTMINYFQPGATPEVFYSNYIAGGLSSAGVSYSQQEDARSRFASTGDLRWVKVQKTAQSAQITYSSRPYILEGETVKTNSNITETEAKFLYNSESEEALTIRAGINGLINWQNLAIILLPNSGDLNYSIVPFGIFKEKGKDVQVKQKNTGQASQGSDLMNDYYYKI.

The signal sequence occupies residues 1-24 (MKFQRKYWGLLSTLGVSSAVALSA). A lipid anchor (N-palmitoyl cysteine) is attached at Cys-25. The S-diacylglycerol cysteine moiety is linked to residue Cys-25. Disordered stretches follow at residues 111-137 (SNMK…EWEV) and 242-267 (GKNG…KKIE). Low complexity-rich tracts occupy residues 119 to 130 (SSSSSSTGNNGS) and 249 to 260 (KKMTTDSSSTQQ).

To M.pneumoniae MPN_456 and M.genitalium MG321 N-terminal region.

The protein resides in the cell membrane. This is an uncharacterized protein from Mycoplasma pneumoniae (strain ATCC 29342 / M129 / Subtype 1) (Mycoplasmoides pneumoniae).